Consider the following 183-residue polypeptide: Capsid protein (183 aa).

The interval 136 to 183 (NAPILSTLPETTVVRRRGRSPRRRTPSPRRRRSQSPRRRRSQSRESQC) is disordered. Positions 149–176 (VRRRGRSPRRRTPSPRRRRSQSPRRRRS) are enriched in basic residues. Phosphoserine; by host is present on residues serine 155, serine 162, and serine 170. One copy of the 1; half-length repeat lies at 155–161 (SPRRRTP). The segment at 155–177 (SPRRRTPSPRRRRSQSPRRRRSQ) is 3 X 8 AA repeats of S-P-R-R-R-[PR]-S-Q. The Bipartite nuclear localization signal signature appears at 158 to 175 (RRTPSPRRRRSQSPRRRR). 2 consecutive repeat copies span residues 162 to 169 (SPRRRRSQ) and 170 to 177 (SPRRRRSQ). Residues 177 to 183 (QSRESQC) form an RNA binding region.

It belongs to the orthohepadnavirus core antigen family. In terms of assembly, homodimerizes, then multimerizes. Interacts with cytosol exposed regions of viral L glycoprotein present in the reticulum-to-Golgi compartment. Interacts with human FLNB. Phosphorylated form interacts with host importin alpha; this interaction depends on the exposure of the NLS, which itself depends upon genome maturation and/or phosphorylation of the capsid protein. Interacts with host NUP153. Phosphorylated by host SRPK1, SRPK2, and maybe protein kinase C or GAPDH. Phosphorylation is critical for pregenomic RNA packaging. Protein kinase C phosphorylation is stimulated by HBx protein and may play a role in transport of the viral genome to the nucleus at the late step during the viral replication cycle.

It localises to the virion. The protein resides in the host cytoplasm. Its function is as follows. Self assembles to form an icosahedral capsid. Most capsids appear to be large particles with an icosahedral symmetry of T=4 and consist of 240 copies of capsid protein, though a fraction forms smaller T=3 particles consisting of 180 capsid proteins. Entering capsids are transported along microtubules to the nucleus. Phosphorylation of the capsid is thought to induce exposure of nuclear localization signal in the C-terminal portion of the capsid protein that allows binding to the nuclear pore complex via the importin (karyopherin-) alpha and beta. Capsids are imported in intact form through the nuclear pore into the nuclear basket, where it probably binds NUP153. Only capsids that contain the mature viral genome can release the viral DNA and capsid protein into the nucleoplasm. Immature capsids get stuck in the basket. Capsids encapsulate the pre-genomic RNA and the P protein. Pre-genomic RNA is reverse-transcribed into DNA while the capsid is still in the cytoplasm. The capsid can then either be directed to the nucleus, providing more genomes for transcription, or bud through the endoplasmic reticulum to provide new virions. The protein is Capsid protein of Homo sapiens (Human).